The chain runs to 252 residues: MSNKVIEVKNLNTYFDDHNVLKNINTDIEKNSVTALIGPSGCGKSTFLRTLNRMNDLIPIFRKEGQILLDGKDIYDNNVDVVELRKKVGMVFQKANPFPKSIYDNVAYGLRIHGEKDEDKIEKIVKKSLKAAALWDEVEDKLDKSALGLSGGQQQRLCIARTIAVSPEIILMDEPCSALDPISTIKVEDLINQLKKDYTIVIVTHNMQQATRVSKYTSFFLNGEIIETGNTDDIFLNPKNKQTENYITGRFG.

Positions 6–247 (IEVKNLNTYF…PKNKQTENYI (242 aa)) constitute an ABC transporter domain. 38–45 (GPSGCGKS) contributes to the ATP binding site.

The protein belongs to the ABC transporter superfamily. Phosphate importer (TC 3.A.1.7) family. The complex is composed of two ATP-binding proteins (PstB), two transmembrane proteins (PstC and PstA) and a solute-binding protein (PstS).

The protein localises to the cell membrane. The enzyme catalyses phosphate(out) + ATP + H2O = ADP + 2 phosphate(in) + H(+). In terms of biological role, part of the ABC transporter complex PstSACB involved in phosphate import. Responsible for energy coupling to the transport system. This is Phosphate import ATP-binding protein PstB from Methanosphaera stadtmanae (strain ATCC 43021 / DSM 3091 / JCM 11832 / MCB-3).